Reading from the N-terminus, the 327-residue chain is GMP reductase (327 aa).

Catalysis depends on Cys175, which acts as the Thioimidate intermediate. 204-227 is an NADP(+) binding site; sequence IIADGGIRTHGDIAKSVRFGASMV.

The protein belongs to the IMPDH/GMPR family. GuaC type 2 subfamily.

The enzyme catalyses IMP + NH4(+) + NADP(+) = GMP + NADPH + 2 H(+). Its function is as follows. Catalyzes the irreversible NADPH-dependent deamination of GMP to IMP. It functions in the conversion of nucleobase, nucleoside and nucleotide derivatives of G to A nucleotides, and in maintaining the intracellular balance of A and G nucleotides. The polypeptide is GMP reductase (Lysinibacillus sphaericus (strain C3-41)).